Consider the following 231-residue polypeptide: Augmin complex subunit dgt2 (231 aa).

The stretch at 128–199 forms a coiled coil; it reads QEADLSCDQK…VQTKAELLRG (72 aa).

As to quaternary structure, component of the augmin complex composed of dgt2, dgt3, dgt4, dgt5, dgt6, msd1, msd5 and wac. The complex interacts directly or indirectly with microtubules and is required for centrosome-independent generation of spindle microtubules. dgt2 interacts directly with wac (via coiled coil). As to expression, in adult females, detected only in the abdomen with no expression in the head or thorax (at protein level).

Its subcellular location is the cytoplasm. It is found in the cytoskeleton. The protein localises to the spindle. It localises to the spindle pole. As part of the augmin complex, plays a role in centrosome-independent generation of spindle microtubules. The complex is required for mitotic spindle assembly through its involvement in localizing gamma-tubulin to spindle microtubules. dgt2 binds to microtubules in vitro. The protein is Augmin complex subunit dgt2 of Drosophila melanogaster (Fruit fly).